We begin with the raw amino-acid sequence, 109 residues long: NFSVFAMSADGDAKILYYTGRNKAIVWSGEELGAKLAQEDPSFHFSRVEANVGAPQVNYRQSGGQGQFADITVRFEPMDPGSGYEFKMLEPIMKRGQINSFGDKPGGLK.

It belongs to the GTP-binding elongation factor family. EF-G/EF-2 subfamily.

The protein resides in the plastid. Its subcellular location is the chloroplast. The protein operates within protein biosynthesis; polypeptide chain elongation. Chloroplast-localized elongation factor EF-G involved in protein synthesis in plastids. Catalyzes the GTP-dependent ribosomal translocation step during translation elongation. During this step, the ribosome changes from the pre-translocational (PRE) to the post-translocational (POST) state as the newly formed A-site-bound peptidyl-tRNA and P-site-bound deacylated tRNA move to the P and E sites, respectively. Catalyzes the coordinated movement of the two tRNA molecules, the mRNA and conformational changes in the ribosome. The chain is Elongation factor G, chloroplastic from Arachis hypogaea (Peanut).